A 395-amino-acid polypeptide reads, in one-letter code: Zinc finger protein 385D (395 aa).

The Matrin-type 1 zinc-finger motif lies at 80–110; that stretch reads ISCNICQLRFNSDSQAAAHYKGTKHAKKLKA. Polar residues predominate over residues 169-193; sequence MTTEITSKVEKSPTTATGNSSCPST. The segment at 169 to 194 is disordered; that stretch reads MTTEITSKVEKSPTTATGNSSCPSTE. 2 consecutive Matrin-type zinc fingers follow at residues 204–234 and 267–297; these read LYCSLCKVAVNSASQLEAHNSGTKHKTMLEA and FHCEICDVHVNSETQLKQHISSRRHKDRAAG. The tract at residues 282 to 309 is disordered; it reads LKQHISSRRHKDRAAGKPPKPKYSPYNK.

The protein resides in the nucleus. The polypeptide is Zinc finger protein 385D (ZNF385D) (Homo sapiens (Human)).